We begin with the raw amino-acid sequence, 565 residues long: Membrane protein insertase YidC (565 aa).

The next 6 helical transmembrane spans lie at 6 to 26 (VLLI…WGKN), 348 to 368 (LMAL…SLLH), 370 to 390 (WGWA…PLSA), 437 to 457 (GGCF…WVLV), 479 to 499 (PYFI…KLTP), and 516 to 536 (PLIF…YWVI).

The protein belongs to the OXA1/ALB3/YidC family. Type 1 subfamily. Interacts with the Sec translocase complex via SecD. Specifically interacts with transmembrane segments of nascent integral membrane proteins during membrane integration.

The protein localises to the cell inner membrane. Its function is as follows. Required for the insertion and/or proper folding and/or complex formation of integral membrane proteins into the membrane. Involved in integration of membrane proteins that insert both dependently and independently of the Sec translocase complex, as well as at least some lipoproteins. Aids folding of multispanning membrane proteins. The protein is Membrane protein insertase YidC of Xylella fastidiosa (strain M12).